We begin with the raw amino-acid sequence, 447 residues long: Beclin-2 (447 aa).

Residues 169–228 are a coiled coil; the sequence is EALHAELCAELSSLEQEEARLTQELEDLDGHHARVAAELRAAQAESKELYKQHEQHRVEY. The segment at 186–256 is required for homodimer formation; the sequence is EARLTQELED…NQLTYALSQQ (71 aa).

It belongs to the beclin family. As to quaternary structure, homodimer (via coiled-coil domain). Interacts (via coiled-coil domain) with ATG14 (via coiled-coil domain); this interaction is tighter than BECN2 self-association. Interacts with AMBRA1, UVRAG and PIK3C3/VPS34; these interactions are not disrupted by starvation. Does not interact with RUBCN. Interacts (via N-terminus) with GPRASP1/GASP1; the interaction is direct. In terms of tissue distribution, expressed in brain, skeletal muscle, placenta, thymus and uterus. Expressed at a lower level in liver, testis, stomach, and 17-day-old embryos.

The protein resides in the cytoplasm. Functionally, involved in 2 distinct lysosomal degradation pathways: acts as a regulator of autophagy and as a regulator of G-protein coupled receptors turnover. Regulates degradation in lysosomes of a variety of G-protein coupled receptors via its interaction with GPRASP1/GASP1. The chain is Beclin-2 from Mus musculus (Mouse).